A 498-amino-acid polypeptide reads, in one-letter code: MQINPTTSGTAVSQLEEKNLGRVAQIIGPVLDVVFPPGKMPNIYNALVVKGQDADGQEIKVTCEVQQLLGNNRVRAVAMSATDGLTRGMDVIDTGAPLSVPVGGATLGRIFNVLGEPVDNLGPVDTRTTSPIHRSAPAFIQLDTKLAIFETGIKVVDLLAPYRRGGKIGLFGGAGVGKTVLIMELINNIAKAHGGVSVFGGVGERTREGNDLYMEMKESGVINEKNITESKVALVYGQMNEPPGARMRVGLTALTMAEYFRDVNEQDVLLFIDNIFRFVQAGSEVSALLGRMPSAVGYQPTLSTEMGSLQERITSTKEGSITSIQAVYVPADDLTDPAPATTFAHLDATTVLSRGLAAKGIYPAVDPLDSTSTMLQPGIVGEDHYETAQRVKETLQRYKELQDIIAILGLDELSEEDRLTVARARKIERFLSQPFFVAEVFTGSPGKYVGLEETIRGFKLILSGELDSLPEQAFYLVGNIDEATAKAINLEVESKLKK.

G172–T179 serves as a coordination point for ATP.

It belongs to the ATPase alpha/beta chains family. In terms of assembly, F-type ATPases have 2 components, CF(1) - the catalytic core - and CF(0) - the membrane proton channel. CF(1) has five subunits: alpha(3), beta(3), gamma(1), delta(1), epsilon(1). CF(0) has four main subunits: a(1), b(1), b'(1) and c(9-12).

It localises to the plastid. Its subcellular location is the chloroplast thylakoid membrane. It catalyses the reaction ATP + H2O + 4 H(+)(in) = ADP + phosphate + 5 H(+)(out). Its function is as follows. Produces ATP from ADP in the presence of a proton gradient across the membrane. The catalytic sites are hosted primarily by the beta subunits. In Lemna minor (Common duckweed), this protein is ATP synthase subunit beta, chloroplastic.